A 768-amino-acid polypeptide reads, in one-letter code: Translation initiation factor IF-2, chloroplastic (768 aa).

Disordered regions lie at residues 1–20, 54–77, and 155–176; these read MFLNNQNFENRSSRSSSNIN, KSESHTGGEQHLELSSPPKLDKKS, and KKVAVTPSQNSASIQSNSPPES. A compositionally biased stretch (basic and acidic residues) spans 54–65; that stretch reads KSESHTGGEQHL. Residues 160-176 are compositionally biased toward polar residues; sequence TPSQNSASIQSNSPPES. A tr-type G domain is found at 261–434; it reads KRPPIVTVMG…TLLAELEDLK (174 aa). GTP-binding positions include 270-277, 320-324, and 374-377; these read GHVDHGKT, DTPGH, and SKID.

This sequence belongs to the TRAFAC class translation factor GTPase superfamily. Classic translation factor GTPase family. IF-2 subfamily.

Its subcellular location is the plastid. The protein resides in the chloroplast. One of the essential components for the initiation of protein synthesis. Protects formylmethionyl-tRNA from spontaneous hydrolysis and promotes its binding to the 30S ribosomal subunits. Also involved in the hydrolysis of GTP during the formation of the 70S ribosomal complex. In Pyropia yezoensis (Susabi-nori), this protein is Translation initiation factor IF-2, chloroplastic (infB).